Consider the following 180-residue polypeptide: Ribosome-recycling factor (180 aa).

The protein belongs to the RRF family.

The protein localises to the cytoplasm. In terms of biological role, responsible for the release of ribosomes from messenger RNA at the termination of protein biosynthesis. May increase the efficiency of translation by recycling ribosomes from one round of translation to another. In Chlamydia abortus (strain DSM 27085 / S26/3) (Chlamydophila abortus), this protein is Ribosome-recycling factor.